Here is a 198-residue protein sequence, read N- to C-terminus: uncharacterized protein (198 aa).

Residues 72 to 95 (ESEEQYDSDDDNDKLVLNDDEDDE) form a disordered region. A compositionally biased stretch (acidic residues) spans 75–94 (EQYDSDDDNDKLVLNDDEDD). A coiled-coil region spans residues 106-136 (EATNITNINKNIENIKNDMSNLNNMNDSNQK).

This is an uncharacterized protein from Plasmodium falciparum (isolate 3D7).